Reading from the N-terminus, the 397-residue chain is Homeobox protein knotted-1-like 2 (397 aa).

3 disordered regions span residues 43–68, 172–191, and 233–276; these read TFHL…SPGT, FEAR…DPEL, and NNNA…PRAE. Over residues 49–58 the composition is skewed to gly residues; it reads SGGGGGGGSG. The ELK domain maps to 279 to 299; sequence ELKNHLLRKYSGYLSSLKQEL. The segment at residues 300–363 is a DNA-binding region (homeobox; TALE-type); sequence SKKKKKGKLP…NQRKRHWKPS (64 aa).

The protein belongs to the TALE/KNOX homeobox family. Expressed only in the stems.

It localises to the nucleus. Probably binds to the DNA sequence 5'-TGAC-3'. The polypeptide is Homeobox protein knotted-1-like 2 (Malus domestica (Apple)).